Here is a 1940-residue protein sequence, read N- to C-terminus: Myosin-3 (1940 aa).

The Myosin N-terminal SH3-like domain occupies 33 to 82; that stretch reads DAKTYCFVVDSKEEYAKGKIKSSQDGKVTVETEDNRTLVVKPEDVYAMNP. The 694-residue stretch at 86-779 folds into the Myosin motor domain; it reads DRIEDMAMLT…LLGTLEEMRD (694 aa). An N6,N6,N6-trimethyllysine modification is found at Lys-130. 179-186 is an ATP binding site; sequence GESGAGKT. 2 actin-binding regions span residues 656-678 and 758-772; these read LNKL…IPNE and KFGH…GLLG. An IQ domain is found at 782–811; that stretch reads LAKLITRTQAVCRGFLMRVEFQKMVQRRES. A coiled-coil region spans residues 840-1933; it reads LLKSAETEKE…KTRDFTSSRM (1094 aa).

The protein belongs to the TRAFAC class myosin-kinesin ATPase superfamily. Myosin family. As to quaternary structure, muscle myosin is a hexameric protein that consists of 2 heavy chain subunits (MHC), 2 alkali light chain subunits (MLC) and 2 regulatory light chain subunits (MLC-2). In terms of tissue distribution, expressed in fetal bone, thymus, placenta, heart, brain, and liver.

The protein localises to the cytoplasm. It is found in the myofibril. In terms of biological role, muscle contraction. In Homo sapiens (Human), this protein is Myosin-3 (MYH3).